The chain runs to 287 residues: 3-alpha-hydroxysteroid sulfotransferase (287 aa).

Lysine 44–tryptophan 49 serves as a coordination point for 3'-phosphoadenylyl sulfate. Tryptophan 72 and tryptophan 77 together coordinate substrate. Histidine 99 acts as the Proton acceptor in catalysis. Residues arginine 121, serine 129, tyrosine 184, serine 218–methionine 223, and arginine 247–glycine 249 contribute to the 3'-phosphoadenylyl sulfate site.

Belongs to the sulfotransferase 1 family. As to quaternary structure, homodimer. In terms of tissue distribution, adrenal gland and liver.

The protein resides in the cytoplasm. It catalyses the reaction an alcohol + 3'-phosphoadenylyl sulfate = an alkyl sulfate + adenosine 3',5'-bisphosphate + H(+). Its function is as follows. Sulfotransferase that utilizes 3'-phospho-5'-adenylyl sulfate (PAPS) as sulfonate donor to catalyze the sulfonation of 3-alpha-hydroxyl groups of neutral steroids. The protein is 3-alpha-hydroxysteroid sulfotransferase (STD1) of Cavia porcellus (Guinea pig).